A 469-amino-acid chain; its full sequence is RNA-editing ligase 1, mitochondrial (469 aa).

The N-terminal 44 residues, 1–44 (MQLQRLGAPLLKRLVGGCIRQSTAPIMPCVVVSGSGGFLTPVRT), are a transit peptide targeting the mitochondrion. Residues 59-61 (IEI), 86-92 (EKVHGTN), asparagine 92, arginine 111, glutamate 159, phenylalanine 209, and 307-309 (KLR) contribute to the ATP site. Catalysis depends on lysine 87, which acts as the N6-AMP-lysine intermediate. The disordered stretch occupies residues 450–469 (AAAQSEAIPPLSPAAPTKGE).

This sequence belongs to the RNA ligase 2 family. As to quaternary structure, component of the RNA editing complex (editosome), a 1600 kDa complex composed of at least 20 proteins. Interacts with terminal uridylyltransferase MEAT1.

It localises to the mitochondrion. It carries out the reaction ATP + (ribonucleotide)n-3'-hydroxyl + 5'-phospho-(ribonucleotide)m = (ribonucleotide)n+m + AMP + diphosphate.. Essential for RNA editing. RNA editing in kinetoplastid mitochondria inserts and deletes uridylates at multiple sites in pre-mRNAs as directed by guide RNAs. The protein is RNA-editing ligase 1, mitochondrial (REL1) of Trypanosoma brucei brucei (strain 927/4 GUTat10.1).